Consider the following 202-residue polypeptide: U-Kazal-Dg21.2 (202 aa).

The first 20 residues, 1-20 (MKYFLWSAVTIFAIVNVVGA), serve as a signal peptide directing secretion. Residues 21-87 (KNSDFDPRCL…SFCQVEEDFD (67 aa)) constitute a propeptide that is removed on maturation. 3 Kazal-like domains span residues 23–77 (SDFD…KTLM), 85–140 (DFDS…ICRN), and 148–202 (IDPK…KGEC). 5 disulfide bridges follow: C29/C62, C33/C55, C91/C124, C95/C117, and C103/C138. N-linked (GlcNAc...) asparagine glycosylation is present at N140. The propeptide occupies 142–202 (SFKSELIDPK…NWTLIRKGEC (61 aa)). Intrachain disulfides connect C154-C187, C158-C180, and C166-C202. The N-linked (GlcNAc...) asparagine glycan is linked to N193.

In terms of tissue distribution, expressed by the venom gland.

Its subcellular location is the secreted. May act as a serine protease inhibitor, since it possess the kazal serine protease inhibitor signature. The recombinant peptide does not produce toxic effects on insects. This Dolopus genitalis (Giant Australian assassin fly) protein is U-Kazal-Dg21.2.